The following is an 84-amino-acid chain: Peptide Ctry2346 (84 aa).

Residues 1–23 form the signal peptide; sequence MKTQTLLFTFSLVLLMVATQTEA. L33 carries the post-translational modification Leucine amide. Positions 37–84 are excised as a propeptide; the sequence is GLLDNLLGKRGLLFGKRALTNQDLFDLAYDPSLSAADMDALEMLLENY.

This sequence belongs to the non-disulfide-bridged peptide (NDBP) superfamily. Short antimicrobial peptide (group 4) family. As to expression, expressed by the venom gland.

The protein localises to the secreted. Its subcellular location is the target cell membrane. In terms of biological role, antimicrobial peptide. The chain is Peptide Ctry2346 from Chaerilus tryznai (Scorpion).